Reading from the N-terminus, the 581-residue chain is Probable bifunctional SAT/APS kinase 2 (581 aa).

The segment at 1–200 (MSGFVVWFTG…AAGGARGLIA (200 aa)) is adenylsulfate kinase. 10–17 (GLSGAGKS) contributes to the ATP binding site. Ser84 functions as the Phosphoserine intermediate in the catalytic mechanism. The interval 201 to 581 (PHGGELVNRW…ILIESMRSSS (381 aa)) is sulfate adenylyltransferase.

It in the N-terminal section; belongs to the APS kinase family. This sequence in the C-terminal section; belongs to the sulfate adenylyltransferase family.

The enzyme catalyses sulfate + ATP + H(+) = adenosine 5'-phosphosulfate + diphosphate. It carries out the reaction adenosine 5'-phosphosulfate + ATP = 3'-phosphoadenylyl sulfate + ADP + H(+). The protein operates within sulfur metabolism; hydrogen sulfide biosynthesis; sulfite from sulfate: step 1/3. It participates in sulfur metabolism; hydrogen sulfide biosynthesis; sulfite from sulfate: step 2/3. In Sorangium cellulosum (strain So ce56) (Polyangium cellulosum (strain So ce56)), this protein is Probable bifunctional SAT/APS kinase 2 (sat2/cysC2).